The primary structure comprises 101 residues: Small ribosomal subunit protein uS14 (101 aa).

The span at 1–10 (MAKKSSIEKN) shows a compositional bias: basic and acidic residues. A disordered region spans residues 1 to 23 (MAKKSSIEKNNRRKRMVKNAAPK).

This sequence belongs to the universal ribosomal protein uS14 family. Part of the 30S ribosomal subunit. Contacts proteins S3 and S10.

Functionally, binds 16S rRNA, required for the assembly of 30S particles and may also be responsible for determining the conformation of the 16S rRNA at the A site. This Bradyrhizobium diazoefficiens (strain JCM 10833 / BCRC 13528 / IAM 13628 / NBRC 14792 / USDA 110) protein is Small ribosomal subunit protein uS14.